Consider the following 188-residue polypeptide: Xanthine phosphoribosyltransferase (188 aa).

Positions 20 and 27 each coordinate xanthine. 127–131 (AHGEA) is a 5-phospho-alpha-D-ribose 1-diphosphate binding site. Residue K155 participates in xanthine binding.

It belongs to the purine/pyrimidine phosphoribosyltransferase family. Xpt subfamily. In terms of assembly, homodimer.

The protein localises to the cytoplasm. The catalysed reaction is XMP + diphosphate = xanthine + 5-phospho-alpha-D-ribose 1-diphosphate. Its pathway is purine metabolism; XMP biosynthesis via salvage pathway; XMP from xanthine: step 1/1. Functionally, converts the preformed base xanthine, a product of nucleic acid breakdown, to xanthosine 5'-monophosphate (XMP), so it can be reused for RNA or DNA synthesis. This is Xanthine phosphoribosyltransferase from Heliobacterium modesticaldum (strain ATCC 51547 / Ice1).